We begin with the raw amino-acid sequence, 116 residues long: Putative membrane protein (116 aa).

A helical transmembrane segment spans residues 13-33; sequence VISIITFILVIAIFVIEIVSC.

It is found in the host membrane. The protein is Putative membrane protein of Alethinophid 1 reptarenavirus (isolate AlRrV1/Boa/USA/BC/2009) (Golden Gate virus).